The sequence spans 329 residues: Phenylalanine--tRNA ligase alpha subunit (329 aa).

Glutamate 254 provides a ligand contact to Mg(2+).

This sequence belongs to the class-II aminoacyl-tRNA synthetase family. Phe-tRNA synthetase alpha subunit type 1 subfamily. As to quaternary structure, tetramer of two alpha and two beta subunits. Requires Mg(2+) as cofactor.

The protein localises to the cytoplasm. The enzyme catalyses tRNA(Phe) + L-phenylalanine + ATP = L-phenylalanyl-tRNA(Phe) + AMP + diphosphate + H(+). This is Phenylalanine--tRNA ligase alpha subunit from Histophilus somni (strain 2336) (Haemophilus somnus).